Consider the following 90-residue polypeptide: YcgL domain-containing protein Spro_2755 (90 aa).

The 85-residue stretch at 1-85 (MLCVIYRSSK…PLENLLKQHL (85 aa)) folds into the YcgL domain.

This is YcgL domain-containing protein Spro_2755 from Serratia proteamaculans (strain 568).